Here is a 156-residue protein sequence, read N- to C-terminus: Arginine repressor (156 aa).

This sequence belongs to the ArgR family.

It is found in the cytoplasm. It functions in the pathway amino-acid biosynthesis; L-arginine biosynthesis [regulation]. Regulates arginine biosynthesis genes. The polypeptide is Arginine repressor (Shewanella pealeana (strain ATCC 700345 / ANG-SQ1)).